Here is a 511-residue protein sequence, read N- to C-terminus: uncharacterized protein (511 aa).

The next 14 helical transmembrane spans lie at 7–27 (WVIS…NTAL), 46–66 (VNPI…GPLL), 80–100 (LPVF…ALMA), 107–127 (GAAT…SFPI), 134–154 (LLVL…LGTI), 163–183 (WLFF…YFFL), 200–220 (AGIL…IFLQ), 226–246 (SGYV…LLIV), 266–286 (VLGL…LSAF), 301–321 (LILL…LSAL), 329–349 (GMLG…WLHI), 357–377 (MFAA…AAGL), 394–414 (TAVQ…IGFF), and 437–457 (LFFI…CMNA). The tract at residues 465–486 (AHKPHDKAKTAPEKPAVSAQGL) is disordered.

This sequence belongs to the major facilitator superfamily.

Its subcellular location is the cell membrane. This is an uncharacterized protein from Bacillus subtilis (strain 168).